Consider the following 420-residue polypeptide: Annetocin receptor (420 aa).

The Extracellular portion of the chain corresponds to 1–54 (MEMDDDEAILLDDIYALASTPNQTIVTSSFPQTVSPGFLARRNEALAMVEVAVQ). An N-linked (GlcNAc...) asparagine glycan is attached at N22. A helical transmembrane segment spans residues 55–75 (STILILTVVGNAAVLAMIVSL). Residues 76–83 (SRHKDLGR) are Cytoplasmic-facing. A helical membrane pass occupies residues 84–104 (MYTMIGHLSCADLFVAIFNLL). Residues 105–124 (PQLLWDVTHRFRGGRVLCKL) lie on the Extracellular side of the membrane. A disulfide bond links C122 and C201. A helical membrane pass occupies residues 125–145 (VKYVQVVAMYASAYVLMSTAV). Residues 146–166 (DRYTAICHPMRSHTWTSTTAH) are Cytoplasmic-facing. The chain crosses the membrane as a helical span at residues 167–187 (YLVIGAWVLALVFAVPQLVIF). At 188–212 (DYVEVVPGSGVYDCVDHFRPRWTLP) the chain is on the extracellular side. A helical membrane pass occupies residues 213-233 (VYITWFALAVYVIPLVVLATI). Topologically, residues 234-328 (YLRICVVVWK…KTKTVKLTLT (95 aa)) are cytoplasmic. The chain crosses the membrane as a helical span at residues 329–349 (VVISYLVCWAPFFVSHIWSAW). The Extracellular portion of the chain corresponds to 350–360 (DPHAPFEGTEM). The helical transmembrane segment at 361–381 (VITLLLGSLNSCINPWIYLAF) threads the bilayer. The Cytoplasmic segment spans residues 382 to 420 (SDQLRRKVTQCCPRSWGQRPSTLSHDSTDFRSGSRPTHS). Positions 397–420 (WGQRPSTLSHDSTDFRSGSRPTHS) are disordered. The span at 399 to 420 (QRPSTLSHDSTDFRSGSRPTHS) shows a compositional bias: polar residues.

The protein belongs to the G-protein coupled receptor 1 family. Vasopressin/oxytocin receptor subfamily. As to expression, nephridia in clitellum region.

The protein resides in the cell membrane. Its function is as follows. Receptor for annetocin. Activation by annetocin may induce egg-laying behavior through calcium-dependent signaling. This chain is Annetocin receptor, found in Eisenia fetida (Red wiggler worm).